The sequence spans 133 residues: Small ribosomal subunit protein uS8 (133 aa).

It belongs to the universal ribosomal protein uS8 family. In terms of assembly, part of the 30S ribosomal subunit. Contacts proteins S5 and S12.

Functionally, one of the primary rRNA binding proteins, it binds directly to 16S rRNA central domain where it helps coordinate assembly of the platform of the 30S subunit. In Chlamydia abortus (strain DSM 27085 / S26/3) (Chlamydophila abortus), this protein is Small ribosomal subunit protein uS8.